A 405-amino-acid polypeptide reads, in one-letter code: Angiopoietin-related protein 4 (405 aa).

The first 23 residues, 1 to 23 (MRCAPTAGAALVLCAATAGLLSA), serve as a signal peptide directing secretion. Positions 54-146 (GLREHVERTR…QNLQSQIDLL (93 aa)) form a coiled coil. An N-linked (GlcNAc...) asparagine glycan is attached at Asn-176. The Fibrinogen C-terminal domain maps to 178–400 (TRLHRPPRDC…ATTLLIQPME (223 aa)). A disulfide bridge connects residues Cys-187 and Cys-215. Asn-231 and Asn-237 each carry an N-linked (GlcNAc...) asparagine glycan. Residues Cys-340 and Cys-353 are joined by a disulfide bond.

Homooligomer; disulfide-linked via Cys residues in the N-terminal part of the protein. The homooligomer undergoes proteolytic processing to release its carboxyl fibrinogen-like domain, which circulates as a monomer. The homooligomer unprocessed form is able to interact with the extracellular matrix. In terms of processing, N-glycosylated. Forms disulfide-linked dimers and tetramers. Post-translationally, cleaved into a smaller N-terminal chain and a larger chain that contains the fibrinogen C-terminal domain; both cleaved and uncleaved forms are detected in the extracellular space. The cleaved form is not present within the cell.

It localises to the secreted. The protein localises to the extracellular space. Its subcellular location is the extracellular matrix. Its function is as follows. Mediates inactivation of the lipoprotein lipase LPL, and thereby plays a role in the regulation of triglyceride clearance from the blood serum and in lipid metabolism. May also play a role in regulating glucose homeostasis and insulin sensitivity. Inhibits proliferation, migration, and tubule formation of endothelial cells and reduces vascular leakage. Upon heterologous expression, inhibits the adhesion of endothelial cell to the extracellular matrix (ECM), and inhibits the reorganization of the actin cytoskeleton, formation of actin stress fibers and focal adhesions in endothelial cells that have adhered to ANGPTL4-containing ECM (in vitro). Depending on context, may modulate tumor-related angiogenesis. Mediates inactivation of the lipoprotein lipase LPL, and thereby plays an important role in the regulation of triglyceride clearance from the blood serum and in lipid metabolism. Has higher activity in LPL inactivation than the uncleaved protein. The protein is Angiopoietin-related protein 4 (Angptl4) of Rattus norvegicus (Rat).